An 821-amino-acid polypeptide reads, in one-letter code: Calpain-3 (821 aa).

A disordered region spans residues 1-34; sequence MPTVISASMAPRTGASQVPRTMPQAAQGKGTEAG. Positions 73-417 constitute a Calpain catalytic domain; it reads LYLDPEFPPD…FTKLEICNLT (345 aa). Active-site residues include Cys-128, His-334, and Asn-358. Residues 418-586 are domain III; it reads ADALESDKLQ…KRNLSEEVEN (169 aa). Residues 587–649 are linker; that stretch reads TISVDRPVRK…EPSNTDQESE (63 aa). The tract at residues 603-652 is disordered; that stretch reads IFVSDRANSNKELGVDQESEEGQDKTSPDKQEKSPKPEPSNTDQESEEQQ. Over residues 624–638 the composition is skewed to basic and acidic residues; that stretch reads GQDKTSPDKQEKSPK. A compositionally biased stretch (polar residues) spans 641 to 652; sequence PSNTDQESEEQQ. EF-hand domains are found at residues 649-683, 692-725, 722-757, and 787-821; these read EEQQ…VVNK, FTLE…KKIK, KKIK…AGFH, and VRLE…TMYA. Residues 650-821 are domain IV; it reads EQQQFRNIFR…LEWLQLTMYA (172 aa). Residues Ala-662, Asp-665, Glu-667, Glu-672, Asp-705, Asp-707, Ser-709, Arg-711, Glu-716, Asp-735, Asp-737, Ser-739, Thr-741, Glu-746, Asp-800, Asp-802, Asp-804, and Ile-806 each coordinate Ca(2+).

Belongs to the peptidase C2 family. In terms of assembly, homodimer; via EF-hand domain 4. Interacts with TTN/titin. Interacts with CMYA5; this interaction, which results in CMYA5 proteolysis, may protect CAPN3 from autolysis. Interacts with SIMC1. Interacts with UTP25; the interaction is required for CAPN3 translocation to the nucleolus. Skeletal muscle.

The protein localises to the cytoplasm. It localises to the nucleus. It is found in the nucleolus. The enzyme catalyses Broad endopeptidase activity.. Activated by micromolar concentrations of calcium and inhibited by calpastatin. Its function is as follows. Calcium-regulated non-lysosomal thiol-protease. Proteolytically cleaves CTBP1. Mediates, with UTP25, the proteasome-independent degradation of p53/TP53. The sequence is that of Calpain-3 (CAPN3) from Sus scrofa (Pig).